Reading from the N-terminus, the 303-residue chain is Oxygen-dependent coproporphyrinogen-III oxidase (303 aa).

S93 is a substrate binding site. Residues H97 and H107 each coordinate a divalent metal cation. H107 serves as the catalytic Proton donor. Position 109–111 (109–111) interacts with substrate; the sequence is NVR. H146 and H176 together coordinate a divalent metal cation. Residues 241 to 276 are important for dimerization; it reads YVEFNLVYDRGTLFGLQSGGRTESILMSLPPQVRWG. Residue 259 to 261 participates in substrate binding; the sequence is GGR.

It belongs to the aerobic coproporphyrinogen-III oxidase family. Homodimer. A divalent metal cation serves as cofactor.

Its subcellular location is the cytoplasm. It carries out the reaction coproporphyrinogen III + O2 + 2 H(+) = protoporphyrinogen IX + 2 CO2 + 2 H2O. Its pathway is porphyrin-containing compound metabolism; protoporphyrin-IX biosynthesis; protoporphyrinogen-IX from coproporphyrinogen-III (O2 route): step 1/1. Functionally, involved in the heme biosynthesis. Catalyzes the aerobic oxidative decarboxylation of propionate groups of rings A and B of coproporphyrinogen-III to yield the vinyl groups in protoporphyrinogen-IX. The polypeptide is Oxygen-dependent coproporphyrinogen-III oxidase (Pseudomonas entomophila (strain L48)).